Reading from the N-terminus, the 740-residue chain is MAFFTPWKLSSQKLGFFLVTFGFIWGMMLLHFTIQQRTQPESSSMLREQILDLSKRYIKALAEENRNVVDGPYAGVMTAYDLKKTLAVLLDNILQRIGKLESKVDNLVNGTGANSTNSTTAVPSLVSLEKISVADIINGVQEKCVLPPMDGYPHCEGKIKWMKDMWRSDPCYADYGVDGTSCSFFIYLSEVENWCPRLPWRAKNPYEEADHNSLAEIRTDFNILYSMMKKHEEFRWMRLRIRRMADAWIQAIKSLAEKQNLEKRKRKKILVHLGLLTKESGFKIAETAFSGGPLGELVQWSDLITSLYLLGHDIRISASLAELKEIMKKVVGNRSGCPTVGDRIVELIYIDIVGLAQFKKTLGPSWVHYQCMLRVLDSFGTEPEFNHASYAQSKGHKTPWGKWNLNPQQFYTMFPHTPDNSFLGFVVEQHLNSSDIHHINEIKRQNQSLVYGKVDSFWKNKKIYLDIIHTYMEVHATVYGSSTKNIPSYVKNHGILSGRDLQFLLRETKLFVGLGFPYEGPAPLEAIANGCAFLNPKFSPPKSSKNTDFFIGKPTLRELTSQHPYAEVFIGRPHVWTVDLNNREEVEDAVKAILNQKIEPYMPYEFTCEGMLQRINAFIEKQDFCHGQVMWPPLSALQVKLAEPGQSCKQVCQENQLICEPSFFQHLNKEKDLLKYRVTCQSSELYKDILVPSFYPKSKHCVLQGDLLLFSCAGAHPTHQRICPCRDFIKGQVALCKDCL.

The Cytoplasmic segment spans residues 1–13; the sequence is MAFFTPWKLSSQK. A helical; Signal-anchor for type II membrane protein transmembrane segment spans residues 14–30; the sequence is LGFFLVTFGFIWGMMLL. Residues 31 to 740 lie on the Lumenal side of the membrane; it reads HFTIQQRTQP…GQVALCKDCL (710 aa). 3 N-linked (GlcNAc...) asparagine glycosylation sites follow: asparagine 109, asparagine 114, and asparagine 117. 9 cysteine pairs are disulfide-bonded: cysteine 144-cysteine 182, cysteine 155-cysteine 195, cysteine 171-cysteine 337, cysteine 371-cysteine 625, cysteine 648-cysteine 723, cysteine 652-cysteine 725, cysteine 659-cysteine 712, cysteine 680-cysteine 701, and cysteine 736-cysteine 739. The tract at residues 212 to 740 is sufficient for catalytic activity; the sequence is NSLAEIRTDF…GQVALCKDCL (529 aa). N-linked (GlcNAc...) asparagine glycosylation is present at asparagine 333. 377–378 serves as a coordination point for substrate; sequence DS. Residues asparagine 432 and asparagine 446 are each glycosylated (N-linked (GlcNAc...) asparagine). A UDP-N-acetyl-alpha-D-glucosamine-binding site is contributed by glutamate 525. Lysine 553 is a substrate binding site.

The protein belongs to the glycosyltransferase 18 family. In terms of processing, N-glycosylated. A secreted form is released from the membrane after cleavage by gamma-secretase.

Its subcellular location is the golgi apparatus membrane. It is found in the secreted. The catalysed reaction is N(4)-{beta-D-GlcNAc-(1-&gt;2)-[beta-D-GlcNAc-(1-&gt;4)]-alpha-D-Man-(1-&gt;3)-[beta-D-GlcNAc-(1-&gt;2)-alpha-D-Man-(1-&gt;6)]-beta-D-Man-(1-&gt;4)-beta-D-GlcNAc-(1-&gt;4)-beta-D-GlcNAc}-L-asparaginyl-[protein] + UDP-N-acetyl-alpha-D-glucosamine = N(4)-{beta-D-GlcNAc-(1-&gt;2)-[beta-D-GlcNAc-(1-&gt;4)]-alpha-D-Man-(1-&gt;3)-[beta-D-GlcNAc-(1-&gt;2)-[beta-D-GlcNAc-(1-&gt;6)]-alpha-D-Man-(1-&gt;6)]-beta-D-Man-(1-&gt;4)-beta-D-GlcNAc-(1-&gt;4)-beta-D-GlcNAc}-L-asparaginyl-[protein] + UDP + H(+). It participates in protein modification; protein glycosylation. In terms of biological role, catalyzes the addition of N-acetylglucosamine (GlcNAc) in beta 1-6 linkage to the alpha-linked mannose of biantennary N-linked oligosaccharides. Catalyzes an important step in the biosynthesis of branched, complex-type N-glycans, such as those found on EGFR, TGFR (TGF-beta receptor) and CDH2. Via its role in the biosynthesis of complex N-glycans, plays an important role in the activation of cellular signaling pathways, reorganization of the actin cytoskeleton, cell-cell adhesion and cell migration. MGAT5-dependent EGFR N-glycosylation enhances the interaction between EGFR and LGALS3 and thereby prevents rapid EGFR endocytosis and prolongs EGFR signaling. Required for efficient interaction between TGFB1 and its receptor. Enhances activation of intracellular signaling pathways by several types of growth factors, including FGF2, PDGF, IGF, TGFB1 and EGF. MGAT5-dependent CDH2 N-glycosylation inhibits CDH2-mediated homotypic cell-cell adhesion and contributes to the regulation of downstream signaling pathways. Promotes cell migration. Contributes to the regulation of the inflammatory response. MGAT5-dependent TCR N-glycosylation enhances the interaction between TCR and LGALS3, limits agonist-induced TCR clustering, and thereby dampens TCR-mediated responses to antigens. Required for normal leukocyte evasation and accumulation at sites of inflammation. Inhibits attachment of monocytes to the vascular endothelium and subsequent monocyte diapedesis. Functionally, promotes proliferation of umbilical vein endothelial cells and angiogenesis, at least in part by promoting the release of the growth factor FGF2 from the extracellular matrix. This chain is Alpha-1,6-mannosylglycoprotein 6-beta-N-acetylglucosaminyltransferase A (MGAT5), found in Cricetulus griseus (Chinese hamster).